The sequence spans 280 residues: Delta(3,5)-Delta(2,4)-dienoyl-CoA isomerase (280 aa).

Residue E154 is the Proton donor/acceptor of the active site. Positions 278–280 (HKL) match the Peroxisome targeting signal (PTS1) motif.

It belongs to the enoyl-CoA hydratase/isomerase family.

The protein localises to the cytoplasm. Its subcellular location is the cytosol. It is found in the peroxisome. It carries out the reaction a (3E,5Z)-dienoyl-CoA = a (2E,4E)-(5,6-saturated)-dienoyl-CoA. It participates in lipid metabolism; fatty acid beta-oxidation. Peroxisomal di-isomerase that is involved in fatty acid metabolism enzyme by converting 3,5-dienoyl-CoAs to the corresponding 2,4-dienoyl-CoAs. Involved in fatty acid beta-oxidation, which is important for lipid droplets degradation and infectious growth. In Pyricularia oryzae (strain 70-15 / ATCC MYA-4617 / FGSC 8958) (Rice blast fungus), this protein is Delta(3,5)-Delta(2,4)-dienoyl-CoA isomerase.